The sequence spans 549 residues: Protein EPD2 (549 aa).

The first 20 residues, 1 to 20, serve as a signal peptide directing secretion; it reads MISVIKSLLTLSVLSTLAAA. N-linked (GlcNAc...) asparagine glycosylation is present at Asn41. A disulfide bridge connects residues Cys82 and Cys111. N-linked (GlcNAc...) asparagine glycosylation is found at Asn173 and Asn261. 5 disulfides stabilise this stretch: Cys224–Cys358, Cys242–Cys273, Cys381–Cys432, Cys390–Cys456, and Cys409–Cys414. Residue Asn467 is glycosylated (N-linked (GlcNAc...) asparagine). The tract at residues 470 to 518 is disordered; the sequence is ASTSCSAAGGRGLQSGRRSSTTRGGSSSSRSSSSSSSSSTGSGSSNAGI. Residues 484–514 show a composition bias toward low complexity; it reads SGRRSSTTRGGSSSSRSSSSSSSSSTGSGSS.

This sequence belongs to the glycosyl hydrolase 72 family.

Its subcellular location is the cell membrane. The polypeptide is Protein EPD2 (EPD2) (Candida maltosa (Yeast)).